We begin with the raw amino-acid sequence, 520 residues long: Ribonuclease Y (520 aa).

A helical transmembrane segment spans residues 3-23; the sequence is IEIAIVLILAAAGLGYFVGNM. One can recognise a KH domain in the interval 210 to 273; that stretch reads SVSVVALPSD…EVAKIALEKL (64 aa). Positions 336 to 429 constitute an HD domain; that stretch reads VYQHSLEVAF…VQAADALSGA (94 aa).

The protein belongs to the RNase Y family.

Its subcellular location is the cell membrane. Its function is as follows. Endoribonuclease that initiates mRNA decay. This is Ribonuclease Y from Geobacter metallireducens (strain ATCC 53774 / DSM 7210 / GS-15).